A 386-amino-acid polypeptide reads, in one-letter code: Succinate--CoA ligase [ADP-forming] subunit beta (386 aa).

The ATP-grasp domain occupies 9–244 (KDLLTSYQLP…PSQENIRDVL (236 aa)). Residues K46, 53–55 (GRG), V102, and E107 each bind ATP. Residues N199 and D213 each contribute to the Mg(2+) site. Substrate-binding positions include N264 and 321-323 (GIM).

This sequence belongs to the succinate/malate CoA ligase beta subunit family. In terms of assembly, heterotetramer of two alpha and two beta subunits. It depends on Mg(2+) as a cofactor.

The catalysed reaction is succinate + ATP + CoA = succinyl-CoA + ADP + phosphate. It carries out the reaction GTP + succinate + CoA = succinyl-CoA + GDP + phosphate. It participates in carbohydrate metabolism; tricarboxylic acid cycle; succinate from succinyl-CoA (ligase route): step 1/1. Succinyl-CoA synthetase functions in the citric acid cycle (TCA), coupling the hydrolysis of succinyl-CoA to the synthesis of either ATP or GTP and thus represents the only step of substrate-level phosphorylation in the TCA. The beta subunit provides nucleotide specificity of the enzyme and binds the substrate succinate, while the binding sites for coenzyme A and phosphate are found in the alpha subunit. The chain is Succinate--CoA ligase [ADP-forming] subunit beta from Chlamydia muridarum (strain MoPn / Nigg).